We begin with the raw amino-acid sequence, 324 residues long: NADH-ubiquinone oxidoreductase chain 1 (324 aa).

8 consecutive transmembrane segments (helical) span residues L9–L29, L76–P96, L106–G126, I146–Y166, A177–A197, L228–F248, E259–V279, and F299–G319.

Belongs to the complex I subunit 1 family.

The protein localises to the mitochondrion inner membrane. It catalyses the reaction a ubiquinone + NADH + 5 H(+)(in) = a ubiquinol + NAD(+) + 4 H(+)(out). Its function is as follows. Core subunit of the mitochondrial membrane respiratory chain NADH dehydrogenase (Complex I) that is believed to belong to the minimal assembly required for catalysis. Complex I functions in the transfer of electrons from NADH to the respiratory chain. The immediate electron acceptor for the enzyme is believed to be ubiquinone. The sequence is that of NADH-ubiquinone oxidoreductase chain 1 (MT-ND1) from Formosania lacustris (Oriental stream loach).